The following is a 637-amino-acid chain: Galactofuranosyltransferase GlfT2 (637 aa).

4 residues coordinate UDP-alpha-D-galactofuranose: Arg-171, Gln-200, Asn-229, and Asp-256. Mn(2+)-binding residues include Asp-256 and Asp-258. Asp-372 serves as the catalytic Proton acceptor. His-396 is a binding site for Mn(2+).

Belongs to the glycosyltransferase 2 family. In terms of assembly, homotetramer. Mn(2+) serves as cofactor. The cofactor is Mg(2+).

Its subcellular location is the cell membrane. The catalysed reaction is beta-D-galactofuranosyl-(1-&gt;5)-beta-D-galactofuranosyl-(1-&gt;4)-alpha-L-rhamnosyl-(1-&gt;3)-N-acetyl-alpha-D-glucosaminyl-diphospho-trans,octa-cis-decaprenol + 28 UDP-alpha-D-galactofuranose = [beta-D-galactofuranosyl-(1-&gt;5)-beta-D-galactofuranosyl-(1-&gt;6)]14-beta-D-galactofuranosyl-(1-&gt;5)-beta-D-galactofuranosyl-(1-&gt;4)-alpha-L-rhamnopyranosyl-(1-&gt;3)-N-acetyl-alpha-D-glucosaminyl-diphospho-trans,octa-cis-decaprenol + 28 UDP + 28 H(+). The protein operates within cell wall biogenesis; cell wall polysaccharide biosynthesis. Its function is as follows. Involved in the galactan polymerization of the arabinogalactan (AG) region of the mycolylarabinogalactan-peptidoglycan (mAGP) complex, an essential component of the mycobacteria cell wall. Thus, successively transfers approximately 28 galactofuranosyl (Galf) residues from UDP-galactofuranose (UDP-Galf) onto the galactofuranosyl-galactofuranosyl-rhamnosyl-GlcNAc-diphospho-decaprenol (Galf-Galf-Rha-GlcNAc-PP-C50) acceptor produced by GlfT1, with alternating 1-&gt;5 and 1-&gt;6 links, forming a galactan domain with approximately 30 galactofuranosyl residues. The protein is Galactofuranosyltransferase GlfT2 of Mycobacterium tuberculosis (strain ATCC 25618 / H37Rv).